The following is a 561-amino-acid chain: Potassium-transporting ATPase potassium-binding subunit (561 aa).

10 helical membrane-spanning segments follow: residues 4–24 (IVMQ…PLGI), 65–85 (AVSV…VLML), 133–153 (IGLT…LFAV), 177–197 (LYIL…QGVV), 253–273 (FTNL…VVMF), 285–305 (AIMT…TISE), 380–400 (GLYG…LLVG), 417–437 (MVCL…AVAV), 484–504 (MVGA…ALYL), and 528–548 (FIGL…LPAL).

It belongs to the KdpA family. The system is composed of three essential subunits: KdpA, KdpB and KdpC.

It localises to the cell membrane. Part of the high-affinity ATP-driven potassium transport (or Kdp) system, which catalyzes the hydrolysis of ATP coupled with the electrogenic transport of potassium into the cytoplasm. This subunit binds the extracellular potassium ions and delivers the ions to the membrane domain of KdpB through an intramembrane tunnel. The polypeptide is Potassium-transporting ATPase potassium-binding subunit (Listeria monocytogenes serotype 4b (strain CLIP80459)).